Consider the following 177-residue polypeptide: Large ribosomal subunit protein bL19 (177 aa).

Belongs to the bacterial ribosomal protein bL19 family.

This protein is located at the 30S-50S ribosomal subunit interface and may play a role in the structure and function of the aminoacyl-tRNA binding site. The polypeptide is Large ribosomal subunit protein bL19 (Sinorhizobium medicae (strain WSM419) (Ensifer medicae)).